Consider the following 250-residue polypeptide: Ribosomal RNA small subunit methyltransferase J (250 aa).

Residues 101-102, 117-118, 153-154, and Asp-171 each bind S-adenosyl-L-methionine; these read RD, ER, and SS.

Belongs to the methyltransferase superfamily. RsmJ family.

It localises to the cytoplasm. It carries out the reaction guanosine(1516) in 16S rRNA + S-adenosyl-L-methionine = N(2)-methylguanosine(1516) in 16S rRNA + S-adenosyl-L-homocysteine + H(+). Its function is as follows. Specifically methylates the guanosine in position 1516 of 16S rRNA. The polypeptide is Ribosomal RNA small subunit methyltransferase J (Escherichia coli (strain UTI89 / UPEC)).